Consider the following 59-residue polypeptide: Large ribosomal subunit protein bL32 (59 aa).

Belongs to the bacterial ribosomal protein bL32 family.

In Desulfitobacterium hafniense (strain Y51), this protein is Large ribosomal subunit protein bL32.